A 49-amino-acid chain; its full sequence is MPKQTLSNAIPLCPFFNWKASFNPDDISSGYFPWSKTWFSCSLIFRNSW.

This is an uncharacterized protein from Saccharomyces cerevisiae (strain ATCC 204508 / S288c) (Baker's yeast).